The chain runs to 413 residues: Isobutyryl-CoA dehydrogenase, mitochondrial (413 aa).

The N-terminal 20 residues, 1-20, are a transit peptide targeting the mitochondrion; sequence MAMLRSGYRRFGCLRAALKS. Lysine 48 is modified (N6-acetyllysine; alternate). The residue at position 48 (lysine 48) is an N6-succinyllysine; alternate. FAD is bound by residues 156-165 and 189-191; these read YCLTEPGSGS and FIS. Serine 165 contributes to the substrate binding site. Lysine 211 carries the N6-succinyllysine modification. N6-acetyllysine is present on lysine 229. Position 269 is an N6-succinyllysine (lysine 269). Position 272 to 275 (272 to 275) interacts with substrate; sequence NGGR. FAD is bound by residues arginine 300, 310–311, and 369–373; these read SQ and QMHGG. Glutamate 396 (proton acceptor) is an active-site residue. 398–400 lines the FAD pocket; it reads SNE. Arginine 408 provides a ligand contact to substrate.

It belongs to the acyl-CoA dehydrogenase family. Homotetramer, formed by a dimer of dimers. It depends on FAD as a cofactor.

The protein localises to the mitochondrion. The catalysed reaction is 2-methylpropanoyl-CoA + oxidized [electron-transfer flavoprotein] + H(+) = 2-methylpropenoyl-CoA + reduced [electron-transfer flavoprotein]. It carries out the reaction (2S)-2-methylbutanoyl-CoA + oxidized [electron-transfer flavoprotein] + H(+) = (2E)-2-methylbut-2-enoyl-CoA + reduced [electron-transfer flavoprotein]. The enzyme catalyses propanoyl-CoA + oxidized [electron-transfer flavoprotein] + H(+) = acryloyl-CoA + reduced [electron-transfer flavoprotein]. It functions in the pathway amino-acid degradation; L-valine degradation. Functionally, isobutyryl-CoA dehydrogenase which catalyzes the conversion of 2-methylpropanoyl-CoA to (2E)-2-methylpropenoyl-CoA in the valine catabolic pathway. To a lesser extent, also able to catalyze the oxidation of (2S)-2-methylbutanoyl-CoA. This chain is Isobutyryl-CoA dehydrogenase, mitochondrial, found in Mus musculus (Mouse).